The following is a 456-amino-acid chain: Phosphatidylinositol N-acetylglucosaminyltransferase gpi3 subunit (456 aa).

This sequence belongs to the glycosyltransferase group 1 family. Glycosyltransferase 4 subfamily. Component of a Phosphatidylinositol N-acetylglucosaminyltransferase complex.

The enzyme catalyses a 1,2-diacyl-sn-glycero-3-phospho-(1D-myo-inositol) + UDP-N-acetyl-alpha-D-glucosamine = a 6-(N-acetyl-alpha-D-glucosaminyl)-1-(1,2-diacyl-sn-glycero-3-phospho)-1D-myo-inositol + UDP + H(+). It functions in the pathway glycolipid biosynthesis; glycosylphosphatidylinositol-anchor biosynthesis. In terms of biological role, catalytic subunit in the complex catalyzing the transfer of N-acetylglucosamine from UDP-N-acetylglucosamine to phosphatidylinositol, the first step of GPI biosynthesis. The polypeptide is Phosphatidylinositol N-acetylglucosaminyltransferase gpi3 subunit (gpi3) (Schizosaccharomyces pombe (strain 972 / ATCC 24843) (Fission yeast)).